We begin with the raw amino-acid sequence, 408 residues long: Zinc-regulated transporter 1 (408 aa).

A run of 3 helical transmembrane segments spans residues 64 to 84 (IGAI…PLVL), 101 to 121 (LFAR…HLLA), and 141 to 161 (WAPG…VLLN). Phosphothreonine occurs at positions 234 and 237. A run of 5 helical transmembrane segments spans residues 254-274 (FIIL…TTAV), 279-299 (FKTL…GLGS), 315-335 (WVLG…GLGV), 351-371 (GVLD…ELLA), and 387-407 (LIYL…LGKW).

Belongs to the ZIP transporter (TC 2.A.5) family.

Its subcellular location is the endoplasmic reticulum membrane. In terms of biological role, high-affinity zinc transport protein. Regulates intracellular zinc levels. The polypeptide is Zinc-regulated transporter 1 (zrt1) (Schizosaccharomyces pombe (strain 972 / ATCC 24843) (Fission yeast)).